Here is a 348-residue protein sequence, read N- to C-terminus: AT-hook motif nuclear-localized protein 9 (348 aa).

The disordered stretch occupies residues 18–156 (HRGLSGSGPP…MASVGELMPS (139 aa)). Over residues 31–46 (GSPQQQQGLRHLPNQN) the composition is skewed to polar residues. Residues 47–60 (SPFGSGSTGFGSPS) show a composition bias toward low complexity. Positions 98–106 (KRKRGRPRK) match the Bipartite nuclear localization signal motif. Residues 98-110 (KRKRGRPRKYGQD) constitute a DNA-binding region (a.T hook 1). Positions 112–131 (SVSLALSSSSVSTITPNNSN) are enriched in low complexity. A DNA-binding region (a.T hook 2) is located at residues 132–144 (KRGRGRPPGSGKK). Residues 157–299 (SSGMSFTPHV…EEEASEVVQE (143 aa)) enclose the PPC domain.

The protein resides in the nucleus. Transcription factor that specifically binds AT-rich DNA sequences related to the nuclear matrix attachment regions (MARs). This Arabidopsis thaliana (Mouse-ear cress) protein is AT-hook motif nuclear-localized protein 9.